Reading from the N-terminus, the 428-residue chain is Cysteine synthase 2 (428 aa).

Residues 7 to 27 form a helical membrane-spanning segment; sequence IYIGSAFVAGVVLTIAFKDLF. Lysine 106 is modified (N6-(pyridoxal phosphate)lysine). Pyridoxal 5'-phosphate-binding positions include 260-264 and serine 367; that span reads GTGGT.

Belongs to the cysteine synthase/cystathionine beta-synthase family. Pyridoxal 5'-phosphate is required as a cofactor.

The protein resides in the mitochondrion outer membrane. It carries out the reaction O-acetyl-L-serine + hydrogen sulfide = L-cysteine + acetate. Functionally, putative cysteine synthase that catalyzes the conversion of O-acetyl-L-serine (OAS) into cysteine, the last step in the cysteine biosynthesis pathway. However, in contrast to cysteine synthase cysB, this CS-like protein seems not to function in cysteine biosynthesis. The chain is Cysteine synthase 2 from Emericella nidulans (strain FGSC A4 / ATCC 38163 / CBS 112.46 / NRRL 194 / M139) (Aspergillus nidulans).